A 192-amino-acid polypeptide reads, in one-letter code: A-type ATP synthase subunit E (192 aa).

This sequence belongs to the V-ATPase E subunit family. Has multiple subunits with at least A(3), B(3), C, D, E, F, H, I and proteolipid K(x).

Its subcellular location is the cell membrane. Functionally, component of the A-type ATP synthase that produces ATP from ADP in the presence of a proton gradient across the membrane. The sequence is that of A-type ATP synthase subunit E from Metallosphaera sedula (strain ATCC 51363 / DSM 5348 / JCM 9185 / NBRC 15509 / TH2).